The primary structure comprises 418 residues: Tyrosine--tRNA ligase (418 aa).

Tyr34 is a binding site for L-tyrosine. Residues 39–48 carry the 'HIGH' region motif; the sequence is PTADSLHLGH. L-tyrosine-binding residues include Tyr169 and Gln173. The short motif at 229 to 233 is the 'KMSKS' region element; sequence KFGKS. ATP is bound at residue Lys232. Residues 352 to 418 enclose the S4 RNA-binding domain; sequence NNIVELLVSS…GKKKYFVLTY (67 aa).

It belongs to the class-I aminoacyl-tRNA synthetase family. TyrS type 1 subfamily. As to quaternary structure, homodimer.

Its subcellular location is the cytoplasm. The enzyme catalyses tRNA(Tyr) + L-tyrosine + ATP = L-tyrosyl-tRNA(Tyr) + AMP + diphosphate + H(+). In terms of biological role, catalyzes the attachment of tyrosine to tRNA(Tyr) in a two-step reaction: tyrosine is first activated by ATP to form Tyr-AMP and then transferred to the acceptor end of tRNA(Tyr). The polypeptide is Tyrosine--tRNA ligase (Streptococcus pneumoniae (strain CGSP14)).